Consider the following 222-residue polypeptide: Probable GTP-binding protein EngB (222 aa).

The EngB-type G domain maps to 22–197; sequence TSAEIAFVGR…ETVVAGWFAG (176 aa). Mg(2+) contacts are provided by serine 37 and threonine 59. Positions 201 to 222 are disordered; that stretch reads RQADELTDGEPDDRTPDPDSAS. Over residues 212–222 the composition is skewed to basic and acidic residues; the sequence is DDRTPDPDSAS.

Belongs to the TRAFAC class TrmE-Era-EngA-EngB-Septin-like GTPase superfamily. EngB GTPase family. Mg(2+) is required as a cofactor.

In terms of biological role, necessary for normal cell division and for the maintenance of normal septation. The sequence is that of Probable GTP-binding protein EngB from Laribacter hongkongensis (strain HLHK9).